Consider the following 256-residue polypeptide: GDSL esterase/lipase At1g18120 (256 aa).

Residues 1-49 form the signal peptide; the sequence is MYRVYKNNKFILISIPRITNKLWQKNCNLVILLGVLLVLTLFHDPIIVA. The active-site Nucleophile is serine 67. Asparagine 181 carries an N-linked (GlcNAc...) asparagine glycan.

The protein belongs to the 'GDSL' lipolytic enzyme family.

The protein localises to the secreted. The polypeptide is GDSL esterase/lipase At1g18120 (Arabidopsis thaliana (Mouse-ear cress)).